The primary structure comprises 341 residues: KRR1 small subunit processome component homolog (341 aa).

The KH domain maps to 126–194 (DIIKIGNLVH…VRDIVLETMN (69 aa)). Residues 230–244 (KNKNISKRKQPKSRK) are compositionally biased toward basic residues. The disordered stretch occupies residues 230–327 (KNKNISKRKQ…RPSEASKVDV (98 aa)). Residues 271–341 (FLNKEQKQAK…AKLLKANKQK (71 aa)) are a coiled coil. 2 stretches are compositionally biased toward basic and acidic residues: residues 272-303 (LNKEQKQAKRQQERVAKQAEAAKKQDERRNKD) and 313-327 (EQNRKRPSEASKVDV).

The protein belongs to the KRR1 family. Monomer. Component of the ribosomal small subunit (SSU) processome.

It localises to the nucleus. The protein resides in the nucleolus. In terms of biological role, required for 40S ribosome biogenesis. Involved in nucleolar processing of pre-18S ribosomal RNA and ribosome assembly. Binds to RNA. Required for female germline development, cell viability during eye development and for survival of dividing cells and epithelial cells during early wing disk development. This is KRR1 small subunit processome component homolog from Drosophila grimshawi (Hawaiian fruit fly).